A 582-amino-acid chain; its full sequence is Glutamine--tRNA ligase (582 aa).

The short motif at 50–60 (PEPNGYLHIGH) is the 'HIGH' region element. ATP contacts are provided by residues 51–53 (EPN) and 57–63 (HIGHAKS). Aspartate 83 and tyrosine 235 together coordinate L-glutamine. Residues threonine 254 and 289 to 290 (RL) contribute to the ATP site. The 'KMSKS' region motif lies at 296–300 (ITSKR).

Belongs to the class-I aminoacyl-tRNA synthetase family. Monomer.

The protein localises to the cytoplasm. The catalysed reaction is tRNA(Gln) + L-glutamine + ATP = L-glutaminyl-tRNA(Gln) + AMP + diphosphate. The chain is Glutamine--tRNA ligase from Cupriavidus metallidurans (strain ATCC 43123 / DSM 2839 / NBRC 102507 / CH34) (Ralstonia metallidurans).